A 620-amino-acid chain; its full sequence is Glutathione-regulated potassium-efflux system protein KefC (620 aa).

12 consecutive transmembrane segments (helical) span residues 4-24 (HTLI…PIAV), 26-46 (LGLG…PWGL), 54-74 (SILH…GLEL), 90-110 (GALQ…LLGL), 114-134 (VAEL…MQAM), 149-169 (FAVL…IPLL), 178-198 (MGAF…VVLL), 218-238 (VFSA…EEVG), 270-290 (GLLL…GTLI), 294-314 (LRIV…LWLI), 327-347 (WFAV…GAAQ), and 359-379 (SLTL…VILN). The RCK N-terminal domain occupies 399–518 (QPRVIIAGFG…AGVEKPERET (120 aa)). Residues 597–620 (GWQGTEEGKHTGNMADEPETKPSS) form a disordered region.

Belongs to the monovalent cation:proton antiporter 2 (CPA2) transporter (TC 2.A.37) family. KefC subfamily. Homodimer. Interacts with the regulatory subunit KefF.

It is found in the cell inner membrane. Functionally, pore-forming subunit of a potassium efflux system that confers protection against electrophiles. Catalyzes K(+)/H(+) antiport. This is Glutathione-regulated potassium-efflux system protein KefC from Escherichia coli O17:K52:H18 (strain UMN026 / ExPEC).